The primary structure comprises 510 residues: MALRILITVSLVLFSLSHTSFGYSPEEVKSWCGKTPNPQPCEYFLTQKTDVTSIKQDTDFYKISLQLALERATTAQSRTYTLGSKCRNEREKAAWEDCRELYELTVLKLNQTSNSSPGCTKVDKQTWLSTALTNLETCRASLEDLGVPEYVLPLLSNNVTKLISNTLSLNKVPYNEPSYKDGFPTWVKPGDRKLLQTTPRANIVVAQDGSGNVKTIQEAVAAASRAGGSRYVIYIKAGTYNENIEVKLKNIMFVGDGIGKTIITGSKSVGGGATTFKSATVAVVGDNFIARDITIRNTAGPNNHQAVALRSGSDLSVFYRCSFEGYQDTLYVHSQRQFYRECDIYGTVDFIFGNAAVVLQNCNIFARKPPNRTNTLTAQGRTDPNQSTGIIIHNCRVTAASDLKPVQSSVKTFLGRPWKQYSRTVYIKTFLDSLINPAGWMEWSGDFALNTLYYAEYMNTGPGSSTANRVKWRGYHVLTSPSQVSQFTVGNFIAGNSWLPATNVPFTSGL.

A signal peptide spans 1–19 (MALRILITVSLVLFSLSHT). N110 and N158 each carry an N-linked (GlcNAc...) asparagine glycan. Residues T275 and Q305 each coordinate substrate. Residue D328 is the Proton donor of the active site. The cysteines at positions 342 and 362 are disulfide-linked. The active-site Nucleophile is the D349. N371 and N385 each carry an N-linked (GlcNAc...) asparagine glycan. Positions 416 and 418 each coordinate substrate.

The protein in the N-terminal section; belongs to the PMEI family. This sequence in the C-terminal section; belongs to the pectinesterase family. As to expression, expressed at low levels in young leaves, young bark, young fruit, mature fruit vesicles, shoots and flower buds, young bark and juice vesicles. In both leaf and fruit abscission zones, and mature leaves, expression was initially undetectable but increased markedly following ethylene treatment.

The protein localises to the secreted. It localises to the cell wall. The catalysed reaction is [(1-&gt;4)-alpha-D-galacturonosyl methyl ester](n) + n H2O = [(1-&gt;4)-alpha-D-galacturonosyl](n) + n methanol + n H(+). Its pathway is glycan metabolism; pectin degradation; 2-dehydro-3-deoxy-D-gluconate from pectin: step 1/5. In terms of biological role, acts in the modification of cell walls via demethylesterification of cell wall pectin. The sequence is that of Pectinesterase 2 (PECS-2.1) from Citrus sinensis (Sweet orange).